Reading from the N-terminus, the 184-residue chain is Large ribosomal subunit protein uL5 (184 aa).

Belongs to the universal ribosomal protein uL5 family. Part of the 50S ribosomal subunit; part of the 5S rRNA/L5/L18/L25 subcomplex. Contacts the 5S rRNA and the P site tRNA. Forms a bridge to the 30S subunit in the 70S ribosome.

Its function is as follows. This is one of the proteins that bind and probably mediate the attachment of the 5S RNA into the large ribosomal subunit, where it forms part of the central protuberance. In the 70S ribosome it contacts protein S13 of the 30S subunit (bridge B1b), connecting the 2 subunits; this bridge is implicated in subunit movement. Contacts the P site tRNA; the 5S rRNA and some of its associated proteins might help stabilize positioning of ribosome-bound tRNAs. In Ureaplasma parvum serovar 3 (strain ATCC 27815 / 27 / NCTC 11736), this protein is Large ribosomal subunit protein uL5.